Reading from the N-terminus, the 204-residue chain is Ras-related protein RABG1 (204 aa).

Residue 12 to 19 participates in GTP binding; sequence GDSGVGKT. Residues 34–42 carry the Effector region motif; the sequence is HNSTIYVDL. Residues 60-64, 122-125, and 155-156 each bind GTP; these read DTAGQ, NKTD, and SA. S-geranylgeranyl cysteine attachment occurs at residues Cys-202 and Cys-204. At Cys-204 the chain carries Cysteine methyl ester.

Belongs to the small GTPase superfamily. Rab family.

Its subcellular location is the cell membrane. Functionally, intracellular vesicle trafficking and protein transport. The polypeptide is Ras-related protein RABG1 (RABG1) (Arabidopsis thaliana (Mouse-ear cress)).